A 252-amino-acid polypeptide reads, in one-letter code: Ribosomal RNA small subunit methyltransferase J (252 aa).

Residues 101 to 102 (RD), 117 to 118 (ER), 153 to 154 (SS), and Asp-171 contribute to the S-adenosyl-L-methionine site.

Belongs to the methyltransferase superfamily. RsmJ family.

Its subcellular location is the cytoplasm. It catalyses the reaction guanosine(1516) in 16S rRNA + S-adenosyl-L-methionine = N(2)-methylguanosine(1516) in 16S rRNA + S-adenosyl-L-homocysteine + H(+). Specifically methylates the guanosine in position 1516 of 16S rRNA. The polypeptide is Ribosomal RNA small subunit methyltransferase J (Salmonella schwarzengrund (strain CVM19633)).